Consider the following 315-residue polypeptide: Putative methyltransferase SPBC8D2.16c (315 aa).

It belongs to the class IV-like SAM-binding methyltransferase superfamily.

Its subcellular location is the cytoplasm. The protein resides in the nucleus. This Schizosaccharomyces pombe (strain 972 / ATCC 24843) (Fission yeast) protein is Putative methyltransferase SPBC8D2.16c.